Consider the following 223-residue polypeptide: Ribose-5-phosphate isomerase A (223 aa).

Residues 32 to 35 (TGST), 85 to 88 (DGAD), and 98 to 101 (KGGG) each bind substrate. Glu107 functions as the Proton acceptor in the catalytic mechanism. Lys125 contacts substrate.

Belongs to the ribose 5-phosphate isomerase family. In terms of assembly, homodimer.

The catalysed reaction is aldehydo-D-ribose 5-phosphate = D-ribulose 5-phosphate. It functions in the pathway carbohydrate degradation; pentose phosphate pathway; D-ribose 5-phosphate from D-ribulose 5-phosphate (non-oxidative stage): step 1/1. Catalyzes the reversible conversion of ribose-5-phosphate to ribulose 5-phosphate. This Pseudomonas syringae pv. syringae (strain B728a) protein is Ribose-5-phosphate isomerase A.